A 417-amino-acid polypeptide reads, in one-letter code: Serine/threonine-protein phosphatase 4 regulatory subunit 2 (417 aa).

3 stretches are compositionally biased toward polar residues: residues 140–149 (EKNNSNSLNR), 158–170 (NSPS…NING), and 186–196 (APMTTNGLPES). A disordered region spans residues 140 to 417 (EKNNSNSLNR…EVTDEPMEQD (278 aa)). A Phosphoserine modification is found at S159. Residues 197–213 (TDSKEANLQQNEEKNHS) show a composition bias toward basic and acidic residues. Residues 214-226 (DSSTSESEVSSVS) show a composition bias toward low complexity. A Phosphoserine modification is found at S226. Positions 231–258 (KHPDEDAVEAEGHEVKRLRFDKEGEVRE) are enriched in basic and acidic residues. Residues 259–269 (TASQTTSSEIS) are compositionally biased toward polar residues. Over residues 283 to 297 (QDKDKDSRCTRQHCT) the composition is skewed to basic and acidic residues. A compositionally biased stretch (acidic residues) spans 298–311 (EEDEEEDEEEEEES). Residues 318 to 327 (MIPERKNQEK) are compositionally biased toward basic and acidic residues. Over residues 338–350 (ETSEENNQMEESD) the composition is skewed to acidic residues. The span at 353-363 (QAEKDLLHSEG) shows a compositional bias: basic and acidic residues. Residues 366 to 375 (NEGPVSSSSS) show a composition bias toward low complexity. Residues 385–399 (GSNSSKTGEILSESS) show a composition bias toward polar residues. Over residues 400–417 (MENDDEATEVTDEPMEQD) the composition is skewed to acidic residues.

It belongs to the PPP4R2 family. Serine/threonine-protein phosphatase 4 (PP4) occurs in different assemblies of the catalytic and one or more regulatory subunits. Component of the PP4 complexes PPP4C-PPP4R2, PPP4C-PPP4R2-PPP4R3A and PPP4C-PPP4R2-PPP4R3B. The PPP4C-PPP4R2 complex appears to be a tetramer composed of 2 molecules of PPP4C and 2 molecules of PPP4R2. Interacts with DDX20/GEMIN3 and GEMIN4. Interacts with RPA2; this DNA damage-dependent interaction recruits PPP4C leading to RPA2 dephosphorylation. As to expression, widely expressed.

The protein resides in the cytoplasm. Its subcellular location is the cytoskeleton. It localises to the microtubule organizing center. It is found in the centrosome. The protein localises to the nucleus. Its function is as follows. Regulatory subunit of serine/threonine-protein phosphatase 4 (PP4). May regulate the activity of PPP4C at centrosomal microtubule organizing centers. Its interaction with the SMN complex leads to enhance the temporal localization of snRNPs, suggesting a role of PPP4C in maturation of spliceosomal snRNPs. The PPP4C-PPP4R2-PPP4R3A PP4 complex specifically dephosphorylates H2AX phosphorylated on 'Ser-140' (gamma-H2AX) generated during DNA replication and required for DNA double strand break repair. Mediates RPA2 dephosphorylation by recruiting PPP4C to RPA2 in a DNA damage-dependent manner. RPA2 dephosphorylation is required for the efficient RPA2-mediated recruitment of RAD51 to chromatin following double strand breaks, an essential step for DNA repair. This Homo sapiens (Human) protein is Serine/threonine-protein phosphatase 4 regulatory subunit 2 (PPP4R2).